The primary structure comprises 117 residues: MPRVKRGVQARARHKKVLKQAKGYYGARSRVYRVAFQAVIKAGQYAYRDRRAKKRQFRQLWIARINAAARQNGLSYSRFINGLKKASIEIDRKILADIAVFDKAAFAVLVEKAKGAL.

This sequence belongs to the bacterial ribosomal protein bL20 family.

In terms of biological role, binds directly to 23S ribosomal RNA and is necessary for the in vitro assembly process of the 50S ribosomal subunit. It is not involved in the protein synthesizing functions of that subunit. This Vibrio cholerae serotype O1 (strain ATCC 39541 / Classical Ogawa 395 / O395) protein is Large ribosomal subunit protein bL20.